We begin with the raw amino-acid sequence, 495 residues long: Dipeptide and tripeptide permease A (495 aa).

Residues 1–20 (MTTSALNPLRQPKPFYLIFS) are Cytoplasmic-facing. The chain crosses the membrane as a helical span at residues 21 to 41 (IEFWERFGFYGLQGILAVYLV). The Periplasmic segment spans residues 42–51 (KALGLREADS). Residues 52 to 72 (FTLFSSFIALVYGLIAVGGWL) form a helical membrane-spanning segment. The Cytoplasmic segment spans residues 73 to 81 (GDKVLGTKR). 2 helical membrane-spanning segments follow: residues 82 to 102 (TILL…ASSE) and 103 to 123 (HISL…LFKA). Topologically, residues 124 to 145 (NPSSLLSKCYEENDPRLDGAFT) are periplasmic. The chain crosses the membrane as a helical span at residues 146–166 (MYYMAINIGSLLSMLATPWLA). Over 167-171 (DQFGY) the chain is Cytoplasmic. The helical transmembrane segment at 172–192 (AHAFALSVVGMLITVANFILM) threads the bilayer. Topologically, residues 193 to 209 (QGWVKNYGSDADFRTPR) are periplasmic. The helical transmembrane segment at 210–230 (LSTWLAVLAGVVAACAAAALL) threads the bilayer. Topologically, residues 231 to 232 (LK) are cytoplasmic. A helical membrane pass occupies residues 233 to 253 (HEIIANVVLAVLSIGVVGLYV). Topologically, residues 254–266 (KETLLLKGAERKK) are periplasmic. Residues 267–287 (MIVAAILMLQATVFFVLYNQM) traverse the membrane as a helical segment. At 288 to 312 (PLSLNFFAIHNTEHMLFGIPVQPEQ) the chain is on the cytoplasmic side. Residues 313 to 333 (FQSLNPFWIMLASPLLALCYN) form a helical membrane-spanning segment. At 334–344 (KLGNRLPMPHK) the chain is on the periplasmic side. A helical membrane pass occupies residues 345-365 (FAIGMVLCAGAFLVLPLGAKY). Residues 366–375 (ANAQGLVSSN) lie on the Cytoplasmic side of the membrane. A helical membrane pass occupies residues 376–396 (WMVLSYLLQSVGELLISGLGL). Topologically, residues 397-409 (AMVAQLVPQRLMG) are periplasmic. The helical transmembrane segment at 410-430 (FIMGAWFLTSAASSVIAGWVA) threads the bilayer. Over 431–451 (GLTAAPDNVTNPLATLEIYSR) the chain is Cytoplasmic. A helical transmembrane segment spans residues 452-472 (VFTQIGVVTGVIAVVTIIIAP). Residues 473-495 (WLHRMTLDEKPAHPEHEMALDAR) are Periplasmic-facing.

This sequence belongs to the major facilitator superfamily. Proton-dependent oligopeptide transporter (POT/PTR) (TC 2.A.17) family. DtpA subfamily.

It is found in the cell inner membrane. Functionally, proton-dependent permease that transports di- and tripeptides. The sequence is that of Dipeptide and tripeptide permease A from Chromobacterium violaceum (strain ATCC 12472 / DSM 30191 / JCM 1249 / CCUG 213 / NBRC 12614 / NCIMB 9131 / NCTC 9757 / MK).